The primary structure comprises 461 residues: MDYSYDEDLDELCPVCGDKVSGYHYGLLTCESCKGFFKRTVQNNKHYTCTESQSCKIDKTLRKRCPFCRFQKCLTVGMRLEAVRADRMRGGRNKFGPMYKRDRALKQQKKAQIRANGFKLETGPPMGVPPPPPPPPDYMLPPGLHVPEPKGLASGPPAGPLGDFGAPALPMAVPSTNGPLAGYLYPAFPGRAIKSEYPEPYASPPQPGPPYGYPEPFSGGPGVPELILQLLQLEPDEDQVRARIIGCLQEPAKGRPDQPASFNLLCRMADQTFISIVDWARRCMVFKELEVADQMTLLQNCWSELLVFDHIYRQVQHGKEGSTLLVTGQEVELTTVAAQAGSLLHGLVLRAQELVLQMHALQLDRQEFVCLKFLILFSLDVKFLNNHSLVKDAQEKANTALLDYTLCHYPHCGDKFQQLLLCLVEVRALSMQAKEYLYHKHLGNEMPRNNLLIEMLQAKQT.

Positions 10–85 (DELCPVCGDK…VGMRLEAVRA (76 aa)) form a DNA-binding region, nuclear receptor. The NR C4-type zinc-finger motif lies at 13–33 (CPVCGDKVSGYHYGLLTCESC). N6-acetyllysine is present on residues Lys34, Lys38, and Lys72. An NR C4-type zinc finger spans residues 49–73 (CTESQSCKIDKTLRKRCPFCRFQKC). Lys119 is covalently cross-linked (Glycyl lysine isopeptide (Lys-Gly) (interchain with G-Cter in SUMO)). The segment at 119–153 (KLETGPPMGVPPPPPPPPDYMLPPGLHVPEPKGLA) is disordered. Pro residues predominate over residues 126–139 (MGVPPPPPPPPDYM). A Glycyl lysine isopeptide (Lys-Gly) (interchain with G-Cter in SUMO) cross-link involves residue Lys194. Position 203 is a phosphoserine; by CDK7 (Ser203). An NR LBD domain is found at 222 to 459 (GVPELILQLL…NLLIEMLQAK (238 aa)). Residues Gly341, Tyr436, and Lys440 each coordinate a 1,2-diacyl-sn-glycero-3-phosphocholine.

Belongs to the nuclear hormone receptor family. NR5 subfamily. Binds DNA as a monomer. Part of a complex consisting of SFPQ, NONO and NR5A1. Interacts with NR0B2. Interacts with DGKQ and CDK7. Binds to and activated by HIPK3. Acetylation stimulates the transcriptional activity. In terms of processing, sumoylation reduces CDK7-mediated phosphorylation on Ser-203. Post-translationally, phosphorylated on Ser-203 by CDK7. This phosphorylation promotes transcriptional activity.

The protein localises to the nucleus. Its function is as follows. Transcriptional activator. Seems to be essential for sexual differentiation and formation of the primary steroidogenic tissues. Binds to the Ad4 site found in the promoter region of steroidogenic P450 genes such as CYP11A, CYP11B and CYP21B. Also regulates the AMH/Muellerian inhibiting substance gene as well as the AHCH and STAR genes. 5'-YCAAGGYC-3' and 5'-RRAGGTCA-3' are the consensus sequences for the recognition by NR5A1. The SFPQ-NONO-NR5A1 complex binds to the CYP17 promoter and regulates basal and cAMP-dependent transcriptional activity. Binds phospholipids with a phosphatidylinositol (PI) headgroup, in particular PI(3,4)P2 and PI(3,4,5)P3. Activated by the phosphorylation of NR5A1 by HIPK3 leading to increased steroidogenic gene expression upon cAMP signaling pathway stimulation. The protein is Steroidogenic factor 1 (NR5A1) of Equus caballus (Horse).